A 392-amino-acid polypeptide reads, in one-letter code: Formate-dependent phosphoribosylglycinamide formyltransferase (392 aa).

Residues 20 to 21 and Glu-80 each bind N(1)-(5-phospho-beta-D-ribosyl)glycinamide; that span reads EL. Residues Arg-112, Lys-153, 158-163, 193-196, and Glu-201 contribute to the ATP site; these read SSGKGQ and EGFV. The ATP-grasp domain maps to 117 to 306; the sequence is RLAAETLGLP…EFALHVRAIL (190 aa). Mg(2+) is bound by residues Glu-265 and Glu-277. Residues Asp-284, Lys-355, and 362–363 contribute to the N(1)-(5-phospho-beta-D-ribosyl)glycinamide site; that span reads RR.

It belongs to the PurK/PurT family. Homodimer.

It catalyses the reaction N(1)-(5-phospho-beta-D-ribosyl)glycinamide + formate + ATP = N(2)-formyl-N(1)-(5-phospho-beta-D-ribosyl)glycinamide + ADP + phosphate + H(+). Its pathway is purine metabolism; IMP biosynthesis via de novo pathway; N(2)-formyl-N(1)-(5-phospho-D-ribosyl)glycinamide from N(1)-(5-phospho-D-ribosyl)glycinamide (formate route): step 1/1. In terms of biological role, involved in the de novo purine biosynthesis. Catalyzes the transfer of formate to 5-phospho-ribosyl-glycinamide (GAR), producing 5-phospho-ribosyl-N-formylglycinamide (FGAR). Formate is provided by PurU via hydrolysis of 10-formyl-tetrahydrofolate. The sequence is that of Formate-dependent phosphoribosylglycinamide formyltransferase from Aeromonas hydrophila subsp. hydrophila (strain ATCC 7966 / DSM 30187 / BCRC 13018 / CCUG 14551 / JCM 1027 / KCTC 2358 / NCIMB 9240 / NCTC 8049).